Consider the following 156-residue polypeptide: Lipoprotein signal peptidase (156 aa).

3 helical membrane passes run 5–25 (FKFI…DQWV), 64–84 (YLHL…RTLL), and 89–109 (IAFG…FIHG). Catalysis depends on residues Asp-113 and Asp-130. A helical transmembrane segment spans residues 122–142 (NFAIFNVADVMINISVALILI).

Belongs to the peptidase A8 family.

Its subcellular location is the cell inner membrane. The catalysed reaction is Release of signal peptides from bacterial membrane prolipoproteins. Hydrolyzes -Xaa-Yaa-Zaa-|-(S,diacylglyceryl)Cys-, in which Xaa is hydrophobic (preferably Leu), and Yaa (Ala or Ser) and Zaa (Gly or Ala) have small, neutral side chains.. The protein operates within protein modification; lipoprotein biosynthesis (signal peptide cleavage). In terms of biological role, this protein specifically catalyzes the removal of signal peptides from prolipoproteins. The protein is Lipoprotein signal peptidase of Campylobacter jejuni subsp. jejuni serotype O:2 (strain ATCC 700819 / NCTC 11168).